A 270-amino-acid chain; its full sequence is Urease accessory protein UreD (270 aa).

The protein belongs to the UreD family. In terms of assembly, ureD, UreF and UreG form a complex that acts as a GTP-hydrolysis-dependent molecular chaperone, activating the urease apoprotein by helping to assemble the nickel containing metallocenter of UreC. The UreE protein probably delivers the nickel.

Its subcellular location is the cytoplasm. In terms of biological role, required for maturation of urease via the functional incorporation of the urease nickel metallocenter. The protein is Urease accessory protein UreD of Actinobacillus pleuropneumoniae serotype 5b (strain L20).